We begin with the raw amino-acid sequence, 237 residues long: Uridylate kinase (237 aa).

Position 11–14 (11–14 (KLSG)) interacts with ATP. A UMP-binding site is contributed by G52. Residues G53 and R57 each coordinate ATP. UMP is bound by residues D72 and 134 to 141 (TGYSYFTT). ATP is bound by residues N162, Y168, and D171.

Belongs to the UMP kinase family. As to quaternary structure, homohexamer.

Its subcellular location is the cytoplasm. It catalyses the reaction UMP + ATP = UDP + ADP. It functions in the pathway pyrimidine metabolism; CTP biosynthesis via de novo pathway; UDP from UMP (UMPK route): step 1/1. Inhibited by UTP. In terms of biological role, catalyzes the reversible phosphorylation of UMP to UDP. In Mycoplasma capricolum subsp. capricolum (strain California kid / ATCC 27343 / NCTC 10154), this protein is Uridylate kinase.